We begin with the raw amino-acid sequence, 924 residues long: Protein SMAX1-LIKE 2 (924 aa).

One can recognise a Clp R domain in the interval 8–181; the sequence is IQQTLTPEAA…SAIEQSLIGN (174 aa). A repeat 1 region spans residues 12 to 83; the sequence is LTPEAATVLN…LCFSVALERL (72 aa). The segment covering 86 to 105 has biased composition (low complexity); sequence TSTTTTTTSSSSSSSPSQTQ. Residues 86-107 form a disordered region; the sequence is TSTTTTTTSSSSSSSPSQTQEP. Residues 109–181 are repeat 2; that stretch reads LSNALTAALK…SAIEQSLIGN (73 aa). Residues 522–552 are disordered; it reads TRSDITPPGSPVGTDLVLGRPNRGLSSPEKK. The short motif at 780–784 is the EAR element; the sequence is FDLNE.

Belongs to the ClpA/ClpB family. In terms of assembly, interacts probably with TPL/TPR in an EAR-motif dependent manner. In terms of tissue distribution, expressed in seedlings and leaves. Detected in roots and axillary branches.

Its function is as follows. Probable component of a transcriptional corepressor complex that acts specifically in the karrikin pathway. Controls seedling growth redundantly with SMAX1, but is not involved in leaf morphology, shoot branching or germination control. This chain is Protein SMAX1-LIKE 2, found in Arabidopsis thaliana (Mouse-ear cress).